The primary structure comprises 232 residues: Noggin (232 aa).

An N-terminal signal peptide occupies residues 1–27 (MERCPSLGVTLYALVVVLGLRAAPAGG). Asn62 carries an N-linked (GlcNAc...) asparagine glycan. The disordered stretch occupies residues 77 to 99 (GFMATSPPEDRPGGGGGPAGGAE). 4 disulfide bridges follow: Cys155–Cys192, Cys178–Cys228, Cys184–Cys230, and Cys207–Cys215.

This sequence belongs to the noggin family. As to quaternary structure, homodimer. Interacts with GDF5; inhibits chondrocyte differentiation. Expressed in condensing cartilage and immature chondrocytes.

The protein resides in the secreted. Its function is as follows. Essential for cartilage morphogenesis and joint formation. Inhibitor of bone morphogenetic proteins (BMP) signaling which is required for growth and patterning of the neural tube and somite. Inhibits chondrocyte differentiation through its interaction with GDF5 and, probably, GDF6. This is Noggin (Nog) from Mus musculus (Mouse).